We begin with the raw amino-acid sequence, 36 residues long: Photosystem I reaction center subunit VIII (36 aa).

Residues 7 to 29 (PSIFVPLVGLVFPAITMASLFIY) form a helical membrane-spanning segment.

Belongs to the PsaI family.

The protein localises to the plastid. It is found in the chloroplast thylakoid membrane. Functionally, may help in the organization of the PsaL subunit. The polypeptide is Photosystem I reaction center subunit VIII (Psilotum nudum (Whisk fern)).